Here is a 706-residue protein sequence, read N- to C-terminus: Transmembrane 9 superfamily member 3 (706 aa).

An N-terminal signal peptide occupies residues 1–33; sequence MRVRPKRSVITLMAIVVVMLILRNQFYSSRTRG. The Lumenal portion of the chain corresponds to 34–290; it reads HGQEPVISSS…LSDEQSIQFH (257 aa). The chain crosses the membrane as a helical span at residues 291 to 311; that stretch reads WMSLANSVGIVLSISFITLII. Over 312-371 the chain is Cytoplasmic; the sequence is YVRVMYTDKSNSKSPKYMINIEGIETEDDLDDDKYGKYSVYTVAKDWIQNGRPNLFGLKV. A helical transmembrane segment spans residues 372-392; that stretch reads LILLVSFGVQFLFTIIGSLTI. Topologically, residues 393–405 are lumenal; sequence SCSMNKLHNVRNS. A helical transmembrane segment spans residues 406 to 426; it reads VLTMAILFFVLGAFMASFVGT. The Cytoplasmic portion of the chain corresponds to 427 to 456; it reads RLSMVTKTKRTKANYLDDNRYLKDYKKFSP. A helical membrane pass occupies residues 457–477; the sequence is IFTILCGSSLPGIVMVSTFLL. Residues 478–494 are Lumenal-facing; it reads NSIVWAHDSTSALPFKT. A helical transmembrane segment spans residues 495 to 515; it reads IVFFMSIYFIVCIPLSLFGGI. Topologically, residues 516-553 are cytoplasmic; the sequence is VANNIPLPQYWLSGITKDESNSDGNGLFVPKSRAKFNP. The chain crosses the membrane as a helical span at residues 554–574; sequence LVYCGIYLCGIFPLLVIYVEM. The Lumenal segment spans residues 575-592; the sequence is QYVYKSLWLEKTTFYYFY. A helical transmembrane segment spans residues 593-613; that stretch reads GFLFLSIILLCVLTMEISIIG. Residues 614–637 lie on the Cytoplasmic side of the membrane; sequence SYLLMRFCFEDKVVRNNWRWKCFE. A helical membrane pass occupies residues 638 to 658; it reads MGFSGGVYMELYSLYYIFAVL. Topologically, residues 659 to 665 are lumenal; the sequence is NIHGFSS. Residues 666–686 form a helical membrane-spanning segment; that stretch reads ILISICYSLIFNVMCSLGLGA. The Cytoplasmic portion of the chain corresponds to 687–706; it reads LSYLTASWFINKIYHQKVNL.

The protein belongs to the nonaspanin (TM9SF) (TC 9.A.2) family.

It localises to the golgi apparatus membrane. Functionally, with EMP70 and TMN2, plays a critical role in the late stages of a nutrient-controlled pathway notably regulating FLO11 gene expression. Acts downstream of RAS2 and TOR. Essential for cell adhesion and filamentous growth. May play a role as effector of cellular copper homeostasis. The protein is Transmembrane 9 superfamily member 3 (TMN3) of Saccharomyces cerevisiae (strain ATCC 204508 / S288c) (Baker's yeast).